The chain runs to 405 residues: LanC-like protein GCL2 (405 aa).

Positions 278, 323, and 324 each coordinate Zn(2+).

Belongs to the LanC-like protein family.

Functionally, may play a role in signaling. May be not involved in abscisic acid (ABA) signaling. The polypeptide is LanC-like protein GCL2 (GCL2) (Arabidopsis thaliana (Mouse-ear cress)).